The sequence spans 425 residues: UDP-N-acetylglucosamine 1-carboxyvinyltransferase (425 aa).

23–24 (KN) provides a ligand contact to phosphoenolpyruvate. Arginine 100 provides a ligand contact to UDP-N-acetyl-alpha-D-glucosamine. Catalysis depends on cysteine 124, which acts as the Proton donor. A 2-(S-cysteinyl)pyruvic acid O-phosphothioketal modification is found at cysteine 124. Residues aspartate 313 and isoleucine 335 each contribute to the UDP-N-acetyl-alpha-D-glucosamine site.

It belongs to the EPSP synthase family. MurA subfamily.

The protein localises to the cytoplasm. The catalysed reaction is phosphoenolpyruvate + UDP-N-acetyl-alpha-D-glucosamine = UDP-N-acetyl-3-O-(1-carboxyvinyl)-alpha-D-glucosamine + phosphate. It functions in the pathway cell wall biogenesis; peptidoglycan biosynthesis. Cell wall formation. Adds enolpyruvyl to UDP-N-acetylglucosamine. The polypeptide is UDP-N-acetylglucosamine 1-carboxyvinyltransferase (Wolbachia pipientis wMel).